Reading from the N-terminus, the 386-residue chain is MLKRINLLREFSIPLLAGVLTALVWANVAPDSYHKFNHDHFLGPLSFHFVTNDIFMAFFFAIAAVEITQSCLPGGDMSPLNKALNPLLATAGGVVGPVGVYLALNSLVGSSAFTNGWGIPTATDIAFAWLAARLIFGKNHPVIAFLLLLAIADDAIGLVIIAVFYPDPVLPVAPPWLMLTAAGMLIAFILRRKQVKSYWPYLLFGGVPSWFGLFKAHLHPALALVFIIPFLPHPTREVKHMFEEDPKDYSPLARFEHEWKIIVDFGLFMFGLANAGVGFSAMNTVTWLVFCALLFGKVTGIFVFALLGEKLGFPLPQGMGRRHLLVAGIIAGIGFTVALFVAGEAFTDPVVQGAAKMGAILSIAVFPVAMAAAKLLGIRKRGHSSS.

The next 10 membrane-spanning stretches (helical) occupy residues 10 to 30 (EFSIPLLAGVLTALVWANVAP), 45 to 65 (LSFHFVTNDIFMAFFFAIAAV), 84 to 104 (LNPLLATAGGVVGPVGVYLAL), 116 to 136 (GWGIPTATDIAFAWLAARLIF), 142 to 162 (VIAFLLLLAIADDAIGLVIIA), 169 to 189 (VLPVAPPWLMLTAAGMLIAFI), 261 to 281 (IIVDFGLFMFGLANAGVGFSA), 287 to 307 (WLVFCALLFGKVTGIFVFALL), 323 to 343 (HLLVAGIIAGIGFTVALFVAG), and 358 to 378 (GAILSIAVFPVAMAAAKLLGI).

It belongs to the NhaA Na(+)/H(+) (TC 2.A.33) antiporter family.

It is found in the cell inner membrane. It carries out the reaction Na(+)(in) + 2 H(+)(out) = Na(+)(out) + 2 H(+)(in). Na(+)/H(+) antiporter that extrudes sodium in exchange for external protons. This chain is Na(+)/H(+) antiporter NhaA, found in Geotalea uraniireducens (strain Rf4) (Geobacter uraniireducens).